The primary structure comprises 380 residues: Hydrogenase maturation factor HypD1 (380 aa).

Positions 36, 64, and 67 each coordinate Fe cation.

Belongs to the HypD family. It depends on [4Fe-4S] cluster as a cofactor.

It functions in the pathway protein modification; [NiFe] hydrogenase maturation. In terms of biological role, involved in the maturation of [NiFe] hydrogenases. Involved in the biosynthesis of the Fe(CN)(2)CO cofactor. The chain is Hydrogenase maturation factor HypD1 (hypD1) from Bradyrhizobium diazoefficiens (strain JCM 10833 / BCRC 13528 / IAM 13628 / NBRC 14792 / USDA 110).